The chain runs to 257 residues: Phosphonates import ATP-binding protein PhnC 1 (257 aa).

The 245-residue stretch at 2-246 (LKITNLTKRY…EMDTIYAGVP (245 aa)) folds into the ABC transporter domain. 35–42 (GSSGAGKS) is a binding site for ATP.

It belongs to the ABC transporter superfamily. Phosphonates importer (TC 3.A.1.9.1) family. In terms of assembly, the complex is composed of two ATP-binding proteins (PhnC), two transmembrane proteins (PhnE) and a solute-binding protein (PhnD).

It localises to the cell inner membrane. It catalyses the reaction phosphonate(out) + ATP + H2O = phosphonate(in) + ADP + phosphate + H(+). Part of the ABC transporter complex PhnCDE involved in phosphonates import. Responsible for energy coupling to the transport system. The sequence is that of Phosphonates import ATP-binding protein PhnC 1 from Ruegeria sp. (strain TM1040) (Silicibacter sp.).